The chain runs to 527 residues: Glucose transporter 1B/1C/1D/1F/2B (527 aa).

Positions 1–22 (MTERRDNVSHAPDAIEGPNDGA) are disordered. Residues 1–43 (MTERRDNVSHAPDAIEGPNDGAHAEDTSPGFFSLENLGVAQVQ) lie on the Cytoplasmic side of the membrane. Residues 44 to 64 (VVGGTLNGYVIGYVAVYLLLY) traverse the membrane as a helical segment. Residues 65–118 (LTATECKFTTEGACGGRKIYGCKWSGTTCKFENPKCSEGSDPSDSCKNEVAYTS) are Extracellular-facing. Residues 119–139 (VYSGIFACAMIVGSMVGSIIA) traverse the membrane as a helical segment. The Cytoplasmic segment spans residues 140–151 (GKCITTFGLKKS). Residues 152-172 (FIIVSITCTIACVVVQVAIEY) form a helical membrane-spanning segment. Residues 173–175 (NNY) lie on the Extracellular side of the membrane. Residues 176–196 (YALCTGRVLIGLGVGILCSVF) form a helical membrane-spanning segment. The Cytoplasmic segment spans residues 197 to 213 (PMYVNENAHPKLCKMDG). Residues 214–234 (VLFQVFTTLGIMLAAMLGLIL) traverse the membrane as a helical segment. The Extracellular segment spans residues 235 to 249 (DKTGASKEEANMAGR). Residues 250–270 (LHVFSAVPLGLSVAMFLVGMF) traverse the membrane as a helical segment. The Cytoplasmic portion of the chain corresponds to 271-299 (LRESTATFAQDDDGKADGGMDPNEYGWGQ). A helical membrane pass occupies residues 300–320 (MLWPLFMGAVTAGTLQLTGIN). The Extracellular segment spans residues 321 to 338 (AVMNYAPKITENLGMDPS). A helical membrane pass occupies residues 339–359 (LGNFLVMAWNFVTSLVAIPLA). Topologically, residues 360-372 (SRFTMRQMFITCS) are cytoplasmic. The helical transmembrane segment at 373-393 (FVASCMCLFLCGIPVFPGVAG) threads the bilayer. The Extracellular segment spans residues 394–403 (KEVKNGVATT). A helical membrane pass occupies residues 404 to 424 (GIALFIAAFEFGVGSCFFVLA). At 425–436 (QDLFPPSFRPKG) the chain is on the cytoplasmic side. A helical transmembrane segment spans residues 437 to 457 (GSFVVMMQFIFNILINLLYPI). The Extracellular portion of the chain corresponds to 458-475 (TTEAISGGATGNQDKGQA). A helical transmembrane segment spans residues 476–496 (VAFILFGLIGLICSVLQFFYL). The Cytoplasmic portion of the chain corresponds to 497 to 527 (YPYDANQDHENDHGGEPVEQKTYPVEASPRN). Over residues 506–515 (ENDHGGEPVE) the composition is skewed to basic and acidic residues. The interval 506–527 (ENDHGGEPVEQKTYPVEASPRN) is disordered.

The protein belongs to the major facilitator superfamily. Sugar transporter (TC 2.A.1.1) family.

Its subcellular location is the membrane. Functionally, facilitative glucose transporter. This is Glucose transporter 1B/1C/1D/1F/2B (THT1B) from Trypanosoma brucei brucei.